The primary structure comprises 882 residues: DNA mismatch repair protein MutS (882 aa).

Residue 629-636 (GPNMGGKS) coordinates ATP.

This sequence belongs to the DNA mismatch repair MutS family.

Its function is as follows. This protein is involved in the repair of mismatches in DNA. It is possible that it carries out the mismatch recognition step. This protein has a weak ATPase activity. The protein is DNA mismatch repair protein MutS of Ralstonia pickettii (strain 12J).